A 535-amino-acid polypeptide reads, in one-letter code: T-box transcription factor TBX21 (535 aa).

Positions 1 to 62 (MGIVEPGCGD…SLGSPYPGGA (62 aa)) are disordered. A Phosphoserine modification is found at serine 53. Tyrosine 77 carries the phosphotyrosine modification. The segment at 83–109 (AAGFPGAGESFPPPADAEGYQPGEGYA) is disordered. Phosphotyrosine is present on tyrosine 118. The T-box DNA-binding region spans 141 to 326 (LNNHLLWSKF…NNPFAKGFRE (186 aa)). Tyrosine 220 is subject to Phosphotyrosine; by ABL1. A Phosphoserine modification is found at serine 225. Tyrosine 266 is modified (phosphotyrosine; by ABL1). A Phosphothreonine modification is found at threonine 303. A Phosphotyrosine; by ABL1 modification is found at tyrosine 305. A Glycyl lysine isopeptide (Lys-Gly) (interchain with G-Cter in ubiquitin) cross-link involves residue lysine 314. The segment at 449–535 (RPMRTLPMEP…EGQFYNYFPN (87 aa)) is disordered. Low complexity predominate over residues 503–520 (SPYPSSGDSSSPAGAPSP). A Phosphoserine modification is found at serine 513. At tyrosine 530 the chain carries Phosphotyrosine; by ITK.

As to quaternary structure, interacts with RUNX1, RUNX3, ITK, ABL1, RELA, CDK9 and KDM6B. The phosphorylated form (at Thr-303) interacts with NFATC2. Interacts with SMARCA4 in a KDM6B-dependent manner. Interacts with CCTN1. Interacts with USP10. The phosphorylated form (at Tyr-530) interacts with GATA3. Post-translationally, phosphorylations at Ser-53, Tyr-77, Ser-225 and Ser-513 are regulated by mTORC1. Phosphorylation at Tyr-530 is essential for its interaction GATA3. Phosphorylation at Tyr-220, Tyr-266 and Tyr-305 enhances its transcriptional activator activity. Phosphorylation at Thr-303 is required for its interaction with NFATC2. In terms of processing, ubiquitinated at Lys-314, leading to its degradation by the proteasome. Ubiquitination is essential for controlling protein stability, binding to the T-box-binding element of the IFN-gamma promoter, and for interaction with NFATC2 through induction of phosphorylation at Thr-303. Deubiquitinated by USP10 leading to its stabilization. As to expression, T-cell specific.

The protein localises to the nucleus. Lineage-defining transcription factor which initiates Th1 lineage development from naive Th precursor cells both by activating Th1 genetic programs and by repressing the opposing Th2 and Th17 genetic programs. Activates transcription of a set of genes important for Th1 cell function, including those encoding IFN-gamma and the chemokine receptor CXCR3. Induces permissive chromatin accessibilty and CpG methylation in IFNG. Activates IFNG and CXCR3 genes in part by recruiting chromatin remodeling complexes including KDM6B, a SMARCA4-containing SWI/SNF-complex, and an H3K4me2-methyltransferase complex to their promoters and all of these complexes serve to establish a more permissive chromatin state conducive with transcriptional activation. Can activate Th1 genes also via recruitment of Mediator complex and P-TEFb (composed of CDK9 and CCNT1/cyclin-T1) in the form of the super elongation complex (SEC) to super-enhancers and associated genes in activated Th1 cells. Inhibits the Th17 cell lineage commitment by blocking RUNX1-mediated transactivation of Th17 cell-specific transcriptinal regulator RORC. Inhibits the Th2 cell lineage commitment by suppressing the production of Th2 cytokines, such as IL-4, IL-5, and IL- 13, via repression of transcriptional regulators GATA3 and NFATC2. Protects Th1 cells from amplifying aberrant type-I IFN response in an IFN-gamma abundant microenvironment by acting as a repressor of type-I IFN transcription factors and type-I IFN-stimulated genes. Acts as a regulator of antiviral B-cell responses; controls chronic viral infection by promoting the antiviral antibody IgG2a isotype switching and via regulation of a broad antiviral gene expression program. Required for the correct development of natural killer (NK) and mucosal-associated invariant T (MAIT) cells. The protein is T-box transcription factor TBX21 (TBX21) of Homo sapiens (Human).